We begin with the raw amino-acid sequence, 211 residues long: MLCRAVCSASRRLAPALGILGVRQKHSLPDLPYDYGALQPHINAEIMQLHHSKHHAAYLNNLNIAEEKYQEALAKGDVTAQVALQPALKFNGGGHINHSIFWTNLSPNGGGEPKGELLEAIKRDFGSFDKFKEKLTAVSVGVQGSGWGWLGFNKERGCLQIAACSNQDPLQGTTGLIPLLGIDVWEHAYYLQLKNVRPDYLKAIWKVIKNS.

A mitochondrion-targeting transit peptide spans 1–24 (MLCRAVCSASRRLAPALGILGVRQ). His50 serves as a coordination point for Mn(2+). At Tyr58 the chain carries 3'-nitrotyrosine. Lys68 and Lys75 each carry N6-acetyllysine; alternate. 2 positions are modified to N6-succinyllysine; alternate: Lys68 and Lys75. His98 lines the Mn(2+) pocket. Residue Lys114 is modified to N6-acetyllysine. An N6-acetyllysine; alternate mark is found at Lys122 and Lys130. N6-succinyllysine; alternate is present on residues Lys122 and Lys130. Mn(2+)-binding residues include Asp183 and His187. N6-acetyllysine is present on Lys202.

It belongs to the iron/manganese superoxide dismutase family. As to quaternary structure, homotetramer. It depends on Mn(2+) as a cofactor. Nitrated under oxidative stress. Nitration coupled with oxidation inhibits the catalytic activity. Post-translationally, acetylation at Lys-122 decreases enzymatic activity. Deacetylated by SIRT3 upon exposure to ionizing radiations or after long fasting. In terms of processing, polyubiquitinated; leading to proteasomal degradation. Deubiquitinated by USP36 which increases protein stability.

The protein localises to the mitochondrion matrix. It catalyses the reaction 2 superoxide + 2 H(+) = H2O2 + O2. In terms of biological role, destroys superoxide anion radicals which are normally produced within the cells and which are toxic to biological systems. The polypeptide is Superoxide dismutase [Mn], mitochondrial (SOD2) (Cavia porcellus (Guinea pig)).